The sequence spans 319 residues: MSATPDPRSFGKVAVLMGGTSAERDISLMSGGGVLKALQDAGVDAHAFDPKDHELVELRRQGFQRCFIALHGRHGEDGTVQGALELLRIPYTGSGVMASAIAMDKIMTKRVWLAEGLPTPRYVRLAPDEQTPERVRGVPDDLGLPLIVKPPREGSSIGVTKVLGYSQMQDAVALSARHDPDVLCEEFIDGAEVTCPVLGEGANARALPVIRIVPPEAGYDYQNKYFTDEVKYLCPSGLPADEEAEIQRIVLAAYRALGCRGWGRADLMIRASDRKPFLLEMNTSPGMTGHSLVPMSAKAAGLGYEQLCLHILQGAALDA.

The 205-residue stretch at 109–313 (KRVWLAEGLP…YEQLCLHILQ (205 aa)) folds into the ATP-grasp domain. ATP is bound at residue 139–194 (PDDLGLPLIVKPPREGSSIGVTKVLGYSQMQDAVALSARHDPDVLCEEFIDGAEVT). Positions 266, 280, and 282 each coordinate Mg(2+).

Belongs to the D-alanine--D-alanine ligase family. Mg(2+) serves as cofactor. It depends on Mn(2+) as a cofactor.

It is found in the cytoplasm. The catalysed reaction is 2 D-alanine + ATP = D-alanyl-D-alanine + ADP + phosphate + H(+). It functions in the pathway cell wall biogenesis; peptidoglycan biosynthesis. Its function is as follows. Cell wall formation. This Methylibium petroleiphilum (strain ATCC BAA-1232 / LMG 22953 / PM1) protein is D-alanine--D-alanine ligase.